The following is a 220-amino-acid chain: Ribonuclease HII (220 aa).

The RNase H type-2 domain occupies 1–210; the sequence is MKVAGVDEAG…ARKIEERFRK (210 aa). A divalent metal cation is bound by residues Asp7, Glu8, and Asp105.

It belongs to the RNase HII family. It depends on Mn(2+) as a cofactor. The cofactor is Mg(2+).

The protein localises to the cytoplasm. The catalysed reaction is Endonucleolytic cleavage to 5'-phosphomonoester.. Endonuclease that specifically degrades the RNA of RNA-DNA hybrids. The polypeptide is Ribonuclease HII (rnhB) (Pyrococcus horikoshii (strain ATCC 700860 / DSM 12428 / JCM 9974 / NBRC 100139 / OT-3)).